The chain runs to 395 residues: 8-amino-7-oxononanoate synthase (395 aa).

108-109 (GF) serves as a coordination point for pyridoxal 5'-phosphate. H134 lines the substrate pocket. Pyridoxal 5'-phosphate-binding positions include S184, 209–212 (DDAH), and 240–243 (TLSK). An N6-(pyridoxal phosphate)lysine modification is found at K243. Substrate is bound at residue T357.

This sequence belongs to the class-II pyridoxal-phosphate-dependent aminotransferase family. BioF subfamily. Homodimer. The cofactor is pyridoxal 5'-phosphate.

The enzyme catalyses 6-carboxyhexanoyl-[ACP] + L-alanine + H(+) = (8S)-8-amino-7-oxononanoate + holo-[ACP] + CO2. Its pathway is cofactor biosynthesis; biotin biosynthesis. Catalyzes the decarboxylative condensation of pimeloyl-[acyl-carrier protein] and L-alanine to produce 8-amino-7-oxononanoate (AON), [acyl-carrier protein], and carbon dioxide. The protein is 8-amino-7-oxononanoate synthase of Fervidobacterium nodosum (strain ATCC 35602 / DSM 5306 / Rt17-B1).